The primary structure comprises 274 residues: Type II restriction enzyme HgiEI (274 aa).

The protein belongs to the TdeIII type II restriction endonuclease family.

It carries out the reaction Endonucleolytic cleavage of DNA to give specific double-stranded fragments with terminal 5'-phosphates.. Functionally, a P subtype restriction enzyme that recognizes the double-stranded sequence 5'-GGWCC-3' and cleaves after G-1. This system is more active than isoschizomeric RM.HgiBI. The protein is Type II restriction enzyme HgiEI of Herpetosiphon aurantiacus (Herpetosiphon giganteus).